Consider the following 532-residue polypeptide: uncharacterized protein (532 aa).

6 helical membrane passes run 7–26, 30–52, 59–77, 87–109, 116–134, and 139–161; these read HSSY…LGRI, GLSL…GVII, FGLV…PGFF, LIII…KYAF, VVGL…AVAI, and SPLA…ILFV. RCK C-terminal domains lie at 179–262 and 263–346; these read LEIE…LVGE and REEG…LLGN. The next 4 helical transmembrane spans lie at 356–378, 388–410, 446–468, and 509–531; these read FFPI…SFPG, GGVL…LWSM, GLLL…AFVG, and YATV…ATVV.

The protein belongs to the AAE transporter (TC 2.A.81) family.

It localises to the cell membrane. This is an uncharacterized protein from Bacteroides fragilis (strain YCH46).